A 246-amino-acid chain; its full sequence is DNA repair protein RecO (246 aa).

It belongs to the RecO family.

Involved in DNA repair and RecF pathway recombination. In Bifidobacterium adolescentis (strain ATCC 15703 / DSM 20083 / NCTC 11814 / E194a), this protein is DNA repair protein RecO.